The sequence spans 608 residues: Kelch-like protein 10 (608 aa).

In terms of domain architecture, BTB spans 39-106 (CDVVIKVNGF…AYTRTVPITP (68 aa)). 6 Kelch repeats span residues 292-339 (ILFA…YLKG), 340-386 (YVYI…VLSN), 388-433 (IYAM…TLYG), 434-480 (KVYI…AYGE), 481-527 (HVYA…VVDD), and 529-574 (LFVV…VVPG). The residue at position 501 (S501) is a Phosphoserine.

As to quaternary structure, self-associates. Interacts with CUL3; indicative for the participation in an E3 ubiquitin ligase complex.

Its subcellular location is the cytoplasm. Its pathway is protein modification; protein ubiquitination. In terms of biological role, may be a substrate-specific adapter of a CUL3-based E3 ubiquitin-protein ligase complex which mediates the ubiquitination and subsequent proteasomal degradation of target proteins during spermatogenesis. The sequence is that of Kelch-like protein 10 (Klhl10) from Rattus norvegicus (Rat).